Here is a 59-residue protein sequence, read N- to C-terminus: Small ribosomal subunit protein bS21 (59 aa).

Positions 40-59 (KPSIKKRAKSKAALKYKKQR) are disordered.

The protein belongs to the bacterial ribosomal protein bS21 family.

This chain is Small ribosomal subunit protein bS21, found in Protochlamydia amoebophila (strain UWE25).